The sequence spans 855 residues: Vomeronasal type-2 receptor 26 (855 aa).

The signal sequence occupies residues 1–22 (MKLLTAFSPLVVLILFQEQISC). Over 23 to 595 (YYLTKYASSG…FLAHEDPLGT (573 aa)) the chain is Extracellular. N101 and N295 each carry an N-linked (GlcNAc...) asparagine glycan. Residues 596-616 (VLVSLAISLSAFSAMILGLFI) traverse the membrane as a helical segment. Topologically, residues 617 to 630 (CYRETPIVRANNRN) are cytoplasmic. The helical transmembrane segment at 631-651 (LSYLLLISLKLCFSCSLMFIG) threads the bilayer. The Extracellular segment spans residues 652-662 (QPRTVTCVLRQ). A helical transmembrane segment spans residues 663-683 (IIFGIVFSIVISAILAKTFIV). Over 684-706 (VMAFKAIKPGSILKMGMVTRLSN) the chain is Cytoplasmic. The helical transmembrane segment at 707-727 (AIVCCGSIIQVCICAVWLGTY) threads the bilayer. Over 728-753 (PPFPDVDMHSEFGQIILWCNEGSTLA) the chain is Extracellular. The chain crosses the membrane as a helical span at residues 754–774 (FYCVLGYLGFLASLSLLIAFL). The Cytoplasmic portion of the chain corresponds to 775-786 (ARRLPDSFNEAK). The helical transmembrane segment at 787-807 (TITFSMLVFCSVWISFVPAYL) threads the bilayer. At 808 to 814 (SSKGKTM) the chain is on the extracellular side. A helical membrane pass occupies residues 815–835 (VAVEILSILASSAGLLGCIFL). At 836–855 (PKCYVILLKSGGHSRKKFFK) the chain is on the cytoplasmic side.

It belongs to the G-protein coupled receptor 3 family. As to expression, expressed in the basal epithelium of the vomeronasal organ. Located to vomeronasal sensory neurons that project their axons to six to ten glomeruli that reside in globally conserved areas within the caudal accessory olfactory bulb (AOB).

It is found in the cell membrane. Its function is as follows. Putative pheromone receptor. This is Vomeronasal type-2 receptor 26 (Vmn2r26) from Mus musculus (Mouse).